The chain runs to 532 residues: Glutamate--cysteine ligase (532 aa).

It belongs to the glutamate--cysteine ligase type 1 family. Type 1 subfamily.

The enzyme catalyses L-cysteine + L-glutamate + ATP = gamma-L-glutamyl-L-cysteine + ADP + phosphate + H(+). It participates in sulfur metabolism; glutathione biosynthesis; glutathione from L-cysteine and L-glutamate: step 1/2. This chain is Glutamate--cysteine ligase, found in Pseudomonas fluorescens (strain ATCC BAA-477 / NRRL B-23932 / Pf-5).